The following is a 607-amino-acid chain: MVHPLVDRATSDMLIGPDWAMNLEICDMLNHEPGQTREVVSGIKKRLTSRTSKVQLLALTLLETIITNCGELIHMQVAEKDILHKMVKMAKRKPNIQVKEKILILIDTWQESFSGPQGRHPQYYAAYQELLRAGIVFPQRPQITPSSGQNGPSTRYPQNSRNARQEAIDTSTESEFPTLSLTEIQNARGIMDVLAEMMNAIDGNNKEGLKQEVVVDLVSQCRTYKQRVVHLVNSTSDESMLCQGLALNDDLQRLLAKHEAIASGNSMIKKEEKSKKEVPKDTTQIIDVGSSETKNGSVVAYTTNGPKIDLLSGDDFETPNADNSLALVPLGPPQPSSPVAKPDNSIVLIDMLSDNNCESSTPTSNPHANHQKVQQNYSNGFGPGHQEQSYYGQGSSAPVWNLQITQQPSSPAYGNQPFSPNFSPPASPHYGGQNNNVLALPPPPWEAQSPSSSPQYSPTHPMQVTQVVITTHTHQPLGYNPQGGSPHATNNNNNNMFGMFLPPMTGGHMPPPFGHNGHVTNNNYNPNMYGGYGGQAQPPQQYLVEQQMYGMSLQDNGNNNTNPYQVSSHQPPPMMKPMNKKPEDKLFGDLVELSKFKKPTSGRAGSM.

Residues 9-138 (ATSDMLIGPD…ELLRAGIVFP (130 aa)) enclose the VHS domain. The interval 141-175 (PQITPSSGQNGPSTRYPQNSRNARQEAIDTSTESE) is disordered. One can recognise a GAT domain in the interval 175 to 263 (EFPTLSLTEI…LLAKHEAIAS (89 aa)). Residue S297 is modified to Phosphoserine. The segment covering 355 to 379 (NNCESSTPTSNPHANHQKVQQNYSN) has biased composition (polar residues). Disordered regions lie at residues 355–393 (NNCE…YYGQ), 407–460 (QPSS…SPTH), and 555–582 (DNGN…NKKP). Residue S410 is modified to Phosphoserine. Residues 448–460 (QSPSSSPQYSPTH) show a composition bias toward low complexity. The segment covering 555–569 (DNGNNNTNPYQVSSH) has biased composition (polar residues).

The protein belongs to the TOM1 family. In terms of tissue distribution, specifically expressed in siliques and flowers.

Its subcellular location is the membrane. Might contribute to the loading of the ESCRT machinery. This Arabidopsis thaliana (Mouse-ear cress) protein is TOM1-like protein 8.